The chain runs to 392 residues: Imidazolonepropionase (392 aa).

Fe(3+) is bound by residues H69 and H71. Zn(2+) is bound by residues H69 and H71. Residues R78, Y136, and H163 each coordinate 4-imidazolone-5-propanoate. Y136 contacts N-formimidoyl-L-glutamate. H226 contributes to the Fe(3+) binding site. Zn(2+) is bound at residue H226. Residue Q229 coordinates 4-imidazolone-5-propanoate. D302 serves as a coordination point for Fe(3+). Residue D302 participates in Zn(2+) binding. Residues N304 and G306 each contribute to the N-formimidoyl-L-glutamate site. Residue S307 participates in 4-imidazolone-5-propanoate binding.

The protein belongs to the metallo-dependent hydrolases superfamily. HutI family. The cofactor is Zn(2+). Fe(3+) is required as a cofactor.

It is found in the cytoplasm. It catalyses the reaction 4-imidazolone-5-propanoate + H2O = N-formimidoyl-L-glutamate. The protein operates within amino-acid degradation; L-histidine degradation into L-glutamate; N-formimidoyl-L-glutamate from L-histidine: step 3/3. Its function is as follows. Catalyzes the hydrolytic cleavage of the carbon-nitrogen bond in imidazolone-5-propanoate to yield N-formimidoyl-L-glutamate. It is the third step in the universal histidine degradation pathway. This is Imidazolonepropionase from Salinispora arenicola (strain CNS-205).